A 61-amino-acid chain; its full sequence is Small ribosomal subunit protein uS14 (61 aa).

Zn(2+)-binding residues include cysteine 24, cysteine 27, cysteine 40, and cysteine 43.

This sequence belongs to the universal ribosomal protein uS14 family. Zinc-binding uS14 subfamily. In terms of assembly, part of the 30S ribosomal subunit. Contacts proteins S3 and S10. Zn(2+) is required as a cofactor.

Functionally, binds 16S rRNA, required for the assembly of 30S particles and may also be responsible for determining the conformation of the 16S rRNA at the A site. The protein is Small ribosomal subunit protein uS14 of Dictyoglomus thermophilum (strain ATCC 35947 / DSM 3960 / H-6-12).